A 765-amino-acid chain; its full sequence is Probable ATP-dependent RNA helicase DDX27 (765 aa).

Residues 1 to 48 are disordered; sequence MLSELGFIRTIGEDEDVQVEPETDSEDEEEEGPIVLGRKQKALQKNRS. Over residues 13–32 the composition is skewed to acidic residues; sequence EDEDVQVEPETDSEDEEEEG. Residues Ser25 and Ser48 each carry the phosphoserine modification. Residues 55-57 carry the Required for interaction with the PEBOW complex motif; the sequence is FVF. The interval 88–148 is disordered; it reads EKIEKVRKKR…ESETDYSSAD (61 aa). Basic and acidic residues predominate over residues 98 to 119; sequence KTEDKEAKSGKSEKEKEAKEGS. Phosphoserine occurs at positions 135 and 146. Residues 164–169 carry the Nuclear localization signal motif; that stretch reads KKKKKK. Positions 187 to 215 match the Q motif motif; sequence LSFQDMNLSRPLLKAITAMGFKQPTPIQK. The Helicase ATP-binding domain occupies 218 to 392; sequence IPVGLLGKDI…SVSLKNPVRI (175 aa). 231–238 is an ATP binding site; sequence AATGTGKT. A DEAD box motif is present at residues 340–343; it reads DEAD. The Helicase C-terminal domain occupies 426 to 572; the sequence is LLMRTFTDHV…DVILKFRDKI (147 aa). 2 stretches are compositionally biased toward basic residues: residues 685-694 and 744-765; these read KRNRRAKRAR and LGLP…KRRK. Residues 685 to 765 are disordered; that stretch reads KRNRRAKRAR…KSKSRYKRRK (81 aa).

It belongs to the DEAD box helicase family. DDX27/DRS1 subfamily. Associates with PeBoW complex, composed of BOP1, PES1 and WDR12. Interacts directly with BOP1 and PES1.

Its subcellular location is the nucleus. It localises to the nucleolus. The protein localises to the chromosome. It catalyses the reaction ATP + H2O = ADP + phosphate + H(+). Probable ATP-dependent RNA helicase. Component of the nucleolar ribosomal RNA (rRNA) processing machinery that regulates 3' end formation of ribosomal 47S rRNA. This chain is Probable ATP-dependent RNA helicase DDX27 (DDX27), found in Bos taurus (Bovine).